Here is a 1138-residue protein sequence, read N- to C-terminus: Nuclear pore complex-interacting protein family member B4 (1138 aa).

The helical transmembrane segment at 63–87 (VIIAFPTSYKVVITLWIVYLWVSLL) threads the bilayer. Disordered stretches follow at residues 241–263 (NRMGHQPPPPTQQHSITDNSLSL), 291–620 (TPLP…NIKT), and 873–1138 (ERLR…RRLS). A compositionally biased stretch (polar residues) spans 252–262 (QQHSITDNSLS). Positions 349-359 (PLPPSALPSAP) are enriched in pro residues. Basic and acidic residues-rich tracts occupy residues 406–416 (DNIKTPAERLR), 448–458 (DNIKTPAERLR), 490–500 (DNIKTPAERLR), 532–542 (DNIKTPAERLR), 574–584 (DNIKTPAERLR), 908–918 (DNIKTPAERLR), 950–960 (DNIKTPAERLR), and 992–1002 (DNIKTPAERLR).

This sequence belongs to the NPIP family.

It localises to the membrane. The polypeptide is Nuclear pore complex-interacting protein family member B4 (NPIPB4) (Homo sapiens (Human)).